The sequence spans 596 residues: Elongation factor 4 (596 aa).

The tr-type G domain maps to 2–183 (ENIRNFSIIA…AIIERIPAPS (182 aa)). GTP contacts are provided by residues 14-19 (DHGKST) and 130-133 (NKID).

It belongs to the TRAFAC class translation factor GTPase superfamily. Classic translation factor GTPase family. LepA subfamily.

It localises to the cell inner membrane. It catalyses the reaction GTP + H2O = GDP + phosphate + H(+). Required for accurate and efficient protein synthesis under certain stress conditions. May act as a fidelity factor of the translation reaction, by catalyzing a one-codon backward translocation of tRNAs on improperly translocated ribosomes. Back-translocation proceeds from a post-translocation (POST) complex to a pre-translocation (PRE) complex, thus giving elongation factor G a second chance to translocate the tRNAs correctly. Binds to ribosomes in a GTP-dependent manner. In Nitratiruptor sp. (strain SB155-2), this protein is Elongation factor 4.